We begin with the raw amino-acid sequence, 567 residues long: Malate synthase, glyoxysomal (567 aa).

Arg182 (proton acceptor) is an active-site residue. The active-site Proton donor is the Asp468. Positions 565–567 (SKL) match the Microbody targeting signal motif.

The protein belongs to the malate synthase family.

The protein resides in the glyoxysome. The enzyme catalyses glyoxylate + acetyl-CoA + H2O = (S)-malate + CoA + H(+). Its pathway is carbohydrate metabolism; glyoxylate cycle; (S)-malate from isocitrate: step 2/2. In Gossypium hirsutum (Upland cotton), this protein is Malate synthase, glyoxysomal.